The sequence spans 382 residues: MDQQKVNLLNYNYLQLRELLMAWDEKPFRAQQLFQWIHQVGIRDFAQMTNLGKVLRNKLSQLACIDLPEIVACQKSADGTHKWLLKLECGNCIETVFIPEANRGTLCVSSQVGCALNCSFCSTAKQGFNRNLSTAEIIGQVWLAARELSDNDGTHDKKITNVVMMGMGEPLLNFDNVVSAMNIMMDDLAYGLSKRRVTLSTSGVIPEMERLREVSPVALAVSLHAPTDELRNELVPINKKYPLSQLISLCKRYFKDEPRRKVTFEYVMLKGVNDQPEHASQLIKLLHNVPAKVNLIPFNPFPLTQYQRSSRETIDAFRDKLMKHGINTITRKTRGDDIDAACGQLAGEVKDKTSRSQRWQKLHFMSKTDKSTELTISSEEIA.

The Proton acceptor role is filled by Glu-94. The Radical SAM core domain maps to 100–336 (EANRGTLCVS…NTITRKTRGD (237 aa)). A disulfide bond links Cys-107 and Cys-342. 3 residues coordinate [4Fe-4S] cluster: Cys-114, Cys-118, and Cys-121. S-adenosyl-L-methionine is bound by residues 168-169 (GE), Ser-200, 222-224 (SLH), and Asn-299. Residue Cys-342 is the S-methylcysteine intermediate of the active site.

Belongs to the radical SAM superfamily. RlmN family. The cofactor is [4Fe-4S] cluster.

The protein localises to the cytoplasm. It catalyses the reaction adenosine(2503) in 23S rRNA + 2 reduced [2Fe-2S]-[ferredoxin] + 2 S-adenosyl-L-methionine = 2-methyladenosine(2503) in 23S rRNA + 5'-deoxyadenosine + L-methionine + 2 oxidized [2Fe-2S]-[ferredoxin] + S-adenosyl-L-homocysteine. The catalysed reaction is adenosine(37) in tRNA + 2 reduced [2Fe-2S]-[ferredoxin] + 2 S-adenosyl-L-methionine = 2-methyladenosine(37) in tRNA + 5'-deoxyadenosine + L-methionine + 2 oxidized [2Fe-2S]-[ferredoxin] + S-adenosyl-L-homocysteine. Functionally, specifically methylates position 2 of adenine 2503 in 23S rRNA and position 2 of adenine 37 in tRNAs. m2A2503 modification seems to play a crucial role in the proofreading step occurring at the peptidyl transferase center and thus would serve to optimize ribosomal fidelity. The sequence is that of Dual-specificity RNA methyltransferase RlmN from Legionella pneumophila (strain Lens).